We begin with the raw amino-acid sequence, 197 residues long: Na(+)-translocating NADH-quinone reductase subunit E (197 aa).

The next 6 helical transmembrane spans lie at 11–31 (SVFI…FLAV), 35–55 (VSTA…SVPV), 76–96 (FLKF…LEMF), 108–128 (LGIY…VSFM), 139–159 (VVYG…LAGI), and 175–195 (LGIT…FSGI).

It belongs to the NqrDE/RnfAE family. As to quaternary structure, composed of six subunits; NqrA, NqrB, NqrC, NqrD, NqrE and NqrF.

It is found in the cell inner membrane. The enzyme catalyses a ubiquinone + n Na(+)(in) + NADH + H(+) = a ubiquinol + n Na(+)(out) + NAD(+). Its function is as follows. NQR complex catalyzes the reduction of ubiquinone-1 to ubiquinol by two successive reactions, coupled with the transport of Na(+) ions from the cytoplasm to the periplasm. NqrA to NqrE are probably involved in the second step, the conversion of ubisemiquinone to ubiquinol. The polypeptide is Na(+)-translocating NADH-quinone reductase subunit E (Neisseria meningitidis serogroup B (strain ATCC BAA-335 / MC58)).